Reading from the N-terminus, the 79-residue chain is Putative membrane protein insertion efficiency factor (79 aa).

Belongs to the UPF0161 family.

The protein localises to the cell inner membrane. Its function is as follows. Could be involved in insertion of integral membrane proteins into the membrane. The chain is Putative membrane protein insertion efficiency factor from Thermotoga neapolitana (strain ATCC 49049 / DSM 4359 / NBRC 107923 / NS-E).